Here is a 386-residue protein sequence, read N- to C-terminus: G2/mitotic-specific cyclin-B2 (386 aa).

Positions 45 to 64 (TNGKVGPSKKPSKASCAQKP) are disordered.

The protein belongs to the cyclin family. Cyclin AB subfamily. In terms of assembly, interacts with the CDK1 protein kinase to form a serine/threonine kinase holoenzyme complex also known as maturation promoting factor (MPF). The cyclin subunit imparts substrate specificity to the complex.

Its function is as follows. Essential for the control of the cell cycle at the G2/M (mitosis) transition. The protein is G2/mitotic-specific cyclin-B2 (ccnb2) of Oryzias luzonensis (Luzon ricefish).